Reading from the N-terminus, the 274-residue chain is Ribose-5-phosphate isomerase (274 aa).

The protein belongs to the ribose 5-phosphate isomerase family.

It is found in the cytoplasm. The catalysed reaction is aldehydo-D-ribose 5-phosphate = D-ribulose 5-phosphate. It functions in the pathway carbohydrate degradation; pentose phosphate pathway; D-ribose 5-phosphate from D-ribulose 5-phosphate (non-oxidative stage): step 1/1. In Schizosaccharomyces pombe (strain 972 / ATCC 24843) (Fission yeast), this protein is Ribose-5-phosphate isomerase (rki1).